Here is a 282-residue protein sequence, read N- to C-terminus: Undecaprenyl-diphosphatase (282 aa).

The next 6 helical transmembrane spans lie at 90–110 (YWLGWYVIIGTIPICILGLVC), 121–141 (LWVVATALVAFSGVIAFAEYV), 165–185 (LALIPGVSRSGSTISAGLFLG), 194–214 (FGFLLAIPAVFASGLFSIPDA), 228–248 (QLLVATVIAFVVGLVAVSWLL), and 256–276 (LYWFVGYRIVVGVGVLILLAV).

The protein belongs to the UppP family.

Its subcellular location is the cell membrane. It carries out the reaction di-trans,octa-cis-undecaprenyl diphosphate + H2O = di-trans,octa-cis-undecaprenyl phosphate + phosphate + H(+). Catalyzes the dephosphorylation of undecaprenyl diphosphate (UPP). Confers resistance to bacitracin. The polypeptide is Undecaprenyl-diphosphatase (Mycobacterium leprae (strain Br4923)).